We begin with the raw amino-acid sequence, 244 residues long: uncharacterized protein (244 aa).

In terms of domain architecture, FCP1 homology spans 19–196; the sequence is ATDNRKLVIL…ACVIRYLKHL (178 aa).

This is an uncharacterized protein from Schizosaccharomyces pombe (strain 972 / ATCC 24843) (Fission yeast).